Reading from the N-terminus, the 360-residue chain is Putative F-box protein At3g16210 (360 aa).

The F-box domain occupies 1–48 (MSKFLPEELAIEILVRLSMKDLARFRCVCKTWRDLINDPGFTETYRDM).

In Arabidopsis thaliana (Mouse-ear cress), this protein is Putative F-box protein At3g16210.